The primary structure comprises 1223 residues: ATP-dependent DNA helicase P143 (1223 aa).

A Nuclear localization signal motif is present at residues 692–701; it reads RKCRCVQKIK. 919 to 926 lines the ATP pocket; that stretch reads GVPLSGKS. Positions 967-981 form a DNA-binding region, H-T-H motif; sequence TINELKKCSESFFKK.

It is found in the host nucleus. The catalysed reaction is ATP + H2O = ADP + phosphate + H(+). Essential for the initiation of viral DNA replication, it may contribute to other functions such as controlling the switch to the late phase and leading to the inhibition of host protein synthesis. Required for late and very late gene expression. The polypeptide is ATP-dependent DNA helicase P143 (P143) (Orgyia pseudotsugata multicapsid polyhedrosis virus (OpMNPV)).